The following is a 428-amino-acid chain: Phosphomethylpyrimidine synthase (428 aa).

Substrate is bound by residues Asn-66, Met-95, Tyr-124, His-163, 185–187, 226–229, and Glu-265; these read SRG and DGLR. Residue His-269 participates in Zn(2+) binding. Tyr-292 provides a ligand contact to substrate. Residue His-333 participates in Zn(2+) binding. [4Fe-4S] cluster contacts are provided by Cys-407, Cys-410, and Cys-414.

This sequence belongs to the ThiC family. It depends on [4Fe-4S] cluster as a cofactor.

It carries out the reaction 5-amino-1-(5-phospho-beta-D-ribosyl)imidazole + S-adenosyl-L-methionine = 4-amino-2-methyl-5-(phosphooxymethyl)pyrimidine + CO + 5'-deoxyadenosine + formate + L-methionine + 3 H(+). It functions in the pathway cofactor biosynthesis; thiamine diphosphate biosynthesis. In terms of biological role, catalyzes the synthesis of the hydroxymethylpyrimidine phosphate (HMP-P) moiety of thiamine from aminoimidazole ribotide (AIR) in a radical S-adenosyl-L-methionine (SAM)-dependent reaction. This chain is Phosphomethylpyrimidine synthase, found in Thermococcus kodakarensis (strain ATCC BAA-918 / JCM 12380 / KOD1) (Pyrococcus kodakaraensis (strain KOD1)).